We begin with the raw amino-acid sequence, 174 residues long: Gamma-crystallin C (174 aa).

Beta/gamma crystallin 'Greek key' domains lie at 2-40 (GKITFFEDRSFQGRCYECSSDCPNLQTYFSRCNSVRVDS) and 41-83 (GCWM…RLIP). Residue cysteine 23 is modified to S-methylcysteine. Positions 84–87 (HAGS) are connecting peptide. 2 consecutive Beta/gamma crystallin 'Greek key' domains span residues 88–128 (HRMR…QVLE) and 129–171 (GCWV…RRVV).

This sequence belongs to the beta/gamma-crystallin family.

Functionally, crystallins are the dominant structural components of the vertebrate eye lens. This is Gamma-crystallin C (Crygc) from Mus musculus (Mouse).